A 648-amino-acid polypeptide reads, in one-letter code: Transketolase (648 aa).

A substrate-binding site is contributed by His-22. Thiamine diphosphate contacts are provided by residues His-62 and 109–111; that span reads GPL. Asp-150 is a Mg(2+) binding site. Residues Gly-151 and Asn-180 each contribute to the thiamine diphosphate site. Asn-180 and Val-182 together coordinate Mg(2+). 3 residues coordinate substrate: His-252, Arg-345, and Ser-372. Position 252 (His-252) interacts with thiamine diphosphate. Glu-397 acts as the Proton donor in catalysis. Phe-423 contributes to the thiamine diphosphate binding site. The substrate site is built by His-447, Asp-455, and Arg-506.

The protein belongs to the transketolase family. In terms of assembly, homodimer. The cofactor is Mg(2+). Requires Ca(2+) as cofactor. Mn(2+) is required as a cofactor. It depends on Co(2+) as a cofactor. Thiamine diphosphate serves as cofactor.

The enzyme catalyses D-sedoheptulose 7-phosphate + D-glyceraldehyde 3-phosphate = aldehydo-D-ribose 5-phosphate + D-xylulose 5-phosphate. In terms of biological role, catalyzes the transfer of a two-carbon ketol group from a ketose donor to an aldose acceptor, via a covalent intermediate with the cofactor thiamine pyrophosphate. The polypeptide is Transketolase (tkt) (Mycoplasma genitalium (strain ATCC 33530 / DSM 19775 / NCTC 10195 / G37) (Mycoplasmoides genitalium)).